The chain runs to 217 residues: Probable transaldolase (217 aa).

K83 functions as the Schiff-base intermediate with substrate in the catalytic mechanism.

It belongs to the transaldolase family. Type 3B subfamily.

The protein resides in the cytoplasm. The enzyme catalyses D-sedoheptulose 7-phosphate + D-glyceraldehyde 3-phosphate = D-erythrose 4-phosphate + beta-D-fructose 6-phosphate. Its pathway is carbohydrate degradation; pentose phosphate pathway; D-glyceraldehyde 3-phosphate and beta-D-fructose 6-phosphate from D-ribose 5-phosphate and D-xylulose 5-phosphate (non-oxidative stage): step 2/3. Functionally, transaldolase is important for the balance of metabolites in the pentose-phosphate pathway. This Anaeromyxobacter dehalogenans (strain 2CP-C) protein is Probable transaldolase.